The primary structure comprises 347 residues: UDP-3-O-acylglucosamine N-acyltransferase 1 (347 aa).

The active-site Proton acceptor is His-246.

It belongs to the transferase hexapeptide repeat family. LpxD subfamily. As to quaternary structure, homotrimer.

The catalysed reaction is a UDP-3-O-[(3R)-3-hydroxyacyl]-alpha-D-glucosamine + a (3R)-hydroxyacyl-[ACP] = a UDP-2-N,3-O-bis[(3R)-3-hydroxyacyl]-alpha-D-glucosamine + holo-[ACP] + H(+). It participates in bacterial outer membrane biogenesis; LPS lipid A biosynthesis. Catalyzes the N-acylation of UDP-3-O-acylglucosamine using 3-hydroxyacyl-ACP as the acyl donor. Is involved in the biosynthesis of lipid A, a phosphorylated glycolipid that anchors the lipopolysaccharide to the outer membrane of the cell. In Francisella tularensis subsp. tularensis (strain SCHU S4 / Schu 4), this protein is UDP-3-O-acylglucosamine N-acyltransferase 1.